The following is a 226-amino-acid chain: MTMNMFEQFMSPELLMIPTALLSMLVPVLLIHHNPKLLGNRMTTAIAWLLMTIMSNMTNQLTPSGQKWCQVLTSLLLMILLSNLLGLLPYTFTSTSQLSMNMAMAIPLWMATIITGMTKKPSITLAHMLPEGSPTPLIPFMIIIETISLLMRPLALGVRLTANITAGHLLMTMVSTTTLNFITSHITLSIMTYLLLFLLCILELAVACIQAYVFVLLIILYLQENT.

The next 7 membrane-spanning stretches (helical) occupy residues 11–31, 37–54, 72–92, 98–118, 138–158, 178–198, and 199–219; these read SPEL…VLLI, LLGN…MTIM, LTSL…PYTF, LSMN…TGMT, IPFM…ALGV, TLNF…LLFL, and LCIL…LLII.

The protein belongs to the ATPase A chain family. As to quaternary structure, component of the ATP synthase complex composed at least of ATP5F1A/subunit alpha, ATP5F1B/subunit beta, ATP5MC1/subunit c (homooctomer), MT-ATP6/subunit a, MT-ATP8/subunit 8, ATP5ME/subunit e, ATP5MF/subunit f, ATP5MG/subunit g, ATP5MK/subunit k, ATP5MJ/subunit j, ATP5F1C/subunit gamma, ATP5F1D/subunit delta, ATP5F1E/subunit epsilon, ATP5PF/subunit F6, ATP5PB/subunit b, ATP5PD/subunit d, ATP5PO/subunit OSCP. ATP synthase complex consists of a soluble F(1) head domain (subunits alpha(3) and beta(3)) - the catalytic core - and a membrane F(0) domain - the membrane proton channel (subunits c, a, 8, e, f, g, k and j). These two domains are linked by a central stalk (subunits gamma, delta, and epsilon) rotating inside the F1 region and a stationary peripheral stalk (subunits F6, b, d, and OSCP). Interacts with DNAJC30; interaction is direct.

The protein localises to the mitochondrion inner membrane. It carries out the reaction H(+)(in) = H(+)(out). In terms of biological role, subunit a, of the mitochondrial membrane ATP synthase complex (F(1)F(0) ATP synthase or Complex V) that produces ATP from ADP in the presence of a proton gradient across the membrane which is generated by electron transport complexes of the respiratory chain. ATP synthase complex consist of a soluble F(1) head domain - the catalytic core - and a membrane F(1) domain - the membrane proton channel. These two domains are linked by a central stalk rotating inside the F(1) region and a stationary peripheral stalk. During catalysis, ATP synthesis in the catalytic domain of F(1) is coupled via a rotary mechanism of the central stalk subunits to proton translocation. With the subunit c (ATP5MC1), forms the proton-conducting channel in the F(0) domain, that contains two crucial half-channels (inlet and outlet) that facilitate proton movement from the mitochondrial intermembrane space (IMS) into the matrix. Protons are taken up via the inlet half-channel and released through the outlet half-channel, following a Grotthuss mechanism. The sequence is that of ATP synthase F(0) complex subunit a from Lycodon semicarinatus (Ryukyu odd-tooth snake).